A 109-amino-acid chain; its full sequence is Mitochondrial pyruvate carrier 1 (109 aa).

The residue at position 2 (Ala2) is an N-acetylalanine. Over 2–20 (AGALVRKAADYVRSKDFRD) the chain is Mitochondrial matrix. The helical transmembrane segment at 21–41 (YLMSTHFWGPVANWGLPIAAI) threads the bilayer. Residues 42–52 (NDMKKSPEIIS) lie on the Mother cell cytoplasmic side of the membrane. The helical transmembrane segment at 53–71 (GRMTFALCCYSLTFMRFAY) threads the bilayer. Lys72 is modified (N6-acetyllysine). The Mitochondrial matrix segment spans residues 72 to 109 (KVQPRNWLLFACHATNEVAQLIQGGRLIRHEMSKKASA).

As to quaternary structure, homodimer. Forms heterodimer with MPC2. The heterodimer is the more stable and dominant form.

The protein resides in the mitochondrion inner membrane. It carries out the reaction pyruvate(out) + H(+)(out) = pyruvate(in) + H(+)(in). Functionally, mediates the uptake of pyruvate into mitochondria. In Bos taurus (Bovine), this protein is Mitochondrial pyruvate carrier 1 (MPC1).